The following is a 123-amino-acid chain: Small ribosomal subunit protein uS13 (123 aa).

It belongs to the universal ribosomal protein uS13 family. In terms of assembly, part of the 30S ribosomal subunit. Forms a loose heterodimer with protein S19. Forms two bridges to the 50S subunit in the 70S ribosome.

Its function is as follows. Located at the top of the head of the 30S subunit, it contacts several helices of the 16S rRNA. In the 70S ribosome it contacts the 23S rRNA (bridge B1a) and protein L5 of the 50S subunit (bridge B1b), connecting the 2 subunits; these bridges are implicated in subunit movement. Contacts the tRNAs in the A and P-sites. The chain is Small ribosomal subunit protein uS13 from Neorickettsia sennetsu (strain ATCC VR-367 / Miyayama) (Ehrlichia sennetsu).